We begin with the raw amino-acid sequence, 299 residues long: Oxygen-dependent coproporphyrinogen-III oxidase (299 aa).

Substrate is bound at residue serine 92. Mn(2+)-binding residues include histidine 96 and histidine 106. Histidine 106 acts as the Proton donor in catalysis. A substrate-binding site is contributed by 108 to 110 (NVR). Mn(2+)-binding residues include histidine 145 and histidine 175. The tract at residues 240–275 (YVEFNLVWDRGTLFGLQTGGRTESILMSMPPLVRWE) is important for dimerization. 258–260 (GGR) serves as a coordination point for substrate.

It belongs to the aerobic coproporphyrinogen-III oxidase family. As to quaternary structure, homodimer. The cofactor is Mn(2+).

It is found in the cytoplasm. The enzyme catalyses coproporphyrinogen III + O2 + 2 H(+) = protoporphyrinogen IX + 2 CO2 + 2 H2O. It functions in the pathway porphyrin-containing compound metabolism; protoporphyrin-IX biosynthesis; protoporphyrinogen-IX from coproporphyrinogen-III (O2 route): step 1/1. Involved in the heme biosynthesis. Catalyzes the aerobic oxidative decarboxylation of propionate groups of rings A and B of coproporphyrinogen-III to yield the vinyl groups in protoporphyrinogen-IX. The polypeptide is Oxygen-dependent coproporphyrinogen-III oxidase (Escherichia coli O127:H6 (strain E2348/69 / EPEC)).